We begin with the raw amino-acid sequence, 574 residues long: Optineurin (574 aa).

The segment at 1–33 (MSHQPLSCLTEKGDSPTETTGNGPPTLAHPNLD) is disordered. Residues 38-170 (HELLQQMREL…VSELQLKLNS (133 aa)) adopt a coiled-coil conformation. Positions 58–209 (MKLNNQAMKG…GPIRTDSIDT (152 aa)) are interaction with Rab8. An LIR motif is present at residues 176 to 181 (DSFVEI). At serine 177 the chain carries Phosphoserine; by TBK1. A Phosphoserine modification is found at serine 198. A coiled-coil region spans residues 233–496 (CLREGNQKVE…ALQLAVLLKD (264 aa)). Over residues 262 to 286 (AKDRSETETQTEEHKEQEKEEEKSP) the composition is skewed to basic and acidic residues. The disordered stretch occupies residues 262 to 292 (AKDRSETETQTEEHKEQEKEEEKSPETVGSE). Serine 336 is subject to Phosphoserine. Residues 405–574 (KRRESEKVDK…LLIHVTDCII (170 aa)) form an interaction with HD region. The segment at 406 to 515 (RRESEKVDKV…RQSLMEMQSR (110 aa)) is interaction with MYO6. Positions 468–473 (DFHAER) match the UBAN motif. Phosphoserine is present on serine 521. The segment at 544-574 (QQNIPIHSCPKCGEVLPDIDTLLIHVTDCII) adopts a CCHC NOA-type zinc-finger fold. Zn(2+) is bound by residues cysteine 552, cysteine 555, histidine 568, and cysteine 572.

As to quaternary structure, self-associates. Interacts with HD. Interacts with GTF3A. Interacts with MYO6. Interacts (via UBAN) with ubiquitinated TFRC. Interacts with GTP-bound Rab8 (RAB8A and/or RAB8B). Interacts with TBC1D17. Interacts with TBK1. Interacts with TRAF3. Binds to linear ubiquitin chains. Interacts with LC3 family members MAP1LC3A, MAP1LC3B, GABARAP, GABARAPL1 and GABARAPL2; OPTN phosphorylation increases the association (at least with MAP1LC3B). Interacts with RAB12; the interaction may be indirect. Interacts with TBK1; this interaction leads to the Golgi localization of TBK1 and its subsequent activation. Interacts with palmitoyltransferase ZDHHC17/HIP14; the interaction does not lead to palmitoylation of OPTN. Interacts with CYLD. Interacts with TOM1; the interaction is indirect and is mediated by MYO6, which acts as a bridge between TOM1 and OPTN. Interacts with USP12; the interaction is independent of USP12 deubiquitinase activity and may be involved in regulation of autophagic flux. Post-translationally, phosphorylated by TBK1, leading to restrict bacterial proliferation in case of infection. In terms of tissue distribution, present in aqueous humor of the eye (at protein level). Expressed in trabecular meshwork and astrocytes.

It localises to the cytoplasm. The protein resides in the perinuclear region. Its subcellular location is the golgi apparatus. It is found in the trans-Golgi network. The protein localises to the cytoplasmic vesicle. It localises to the autophagosome. The protein resides in the recycling endosome. Functionally, plays an important role in the maintenance of the Golgi complex, in membrane trafficking, in exocytosis, through its interaction with myosin VI and Rab8. Links myosin VI to the Golgi complex and plays an important role in Golgi ribbon formation. Negatively regulates the induction of IFNB in response to RNA virus infection. Plays a neuroprotective role in the eye and optic nerve. Probably part of the TNF-alpha signaling pathway that can shift the equilibrium toward induction of cell death. May act by regulating membrane trafficking and cellular morphogenesis via a complex that contains Rab8 and huntingtin (HD). Mediates the interaction of Rab8 with the probable GTPase-activating protein TBC1D17 during Rab8-mediated endocytic trafficking, such as that of transferrin receptor (TFRC/TfR); regulates Rab8 recruitment to tubules emanating from the endocytic recycling compartment. Autophagy receptor that interacts directly with both the cargo to become degraded and an autophagy modifier of the MAP1 LC3 family; targets ubiquitin-coated bacteria (xenophagy) and appears to function in the same pathway as SQSTM1 and CALCOCO2/NDP52. In Sus scrofa (Pig), this protein is Optineurin (OPTN).